Consider the following 239-residue polypeptide: Terpene cyclase idtB (239 aa).

The next 5 helical transmembrane spans lie at 20–40 (MADTFVAGMGLGWIVNYALMI), 50–70 (CMALLPLCNNIAWELTYTIVY), 75–95 (RVELLVFAIGLTLNFFIMVGA), 113–133 (AGFILLVGTLLCFTGHVALAM), and 138–158 (GLAYSWGAVVCQLALSIGGLF). The N-linked (GlcNAc...) asparagine glycan is linked to Asn164. A helical membrane pass occupies residues 197–217 (EVFGWLASPLVLWSLVTFLLA).

The protein belongs to the paxB family.

The protein localises to the membrane. It participates in secondary metabolite biosynthesis. Terpene cyclase; part of the gene cluster that mediates the biosynthesis of paspalitrems, indole-diterpene (IDT) mycotoxins that are potent tremorgens in mammals. The geranylgeranyl diphosphate (GGPP) synthase idtG is proposed to catalyze the first step in IDT biosynthesis via catalysis of a series of iterative condensations of isopentenyl diphosphate (IPP) with dimethylallyl diphosphate (DMAPP), geranyl diphosphate (GPP), and farnesyl diphosphate (FPP), to form GGPP. Condensation of indole-3-glycerol phosphate with GGPP by the prenyltransferase idtC then forms 3-geranylgeranylindole (3-GGI). Epoxidation of the two terminal alkenes of the geranylgeranyl moiety by the FAD-dependent monooxygenase idtM, and cyclization by the terpene cyclase idtB then leads to the production of paspaline. The cytochrome P450 monooxygenase idtP then catalyzes oxidative elimination of the pendant methyl group at C-12 of paspaline and generates the C-10 ketone to yield 13-desoxypaxilline. The cytochrome P450 monooxygenase idtQ may catalyze the C-13 oxidation of 13-desoxypaxilline to afford paxilline. Considering that both paspalicine and paxilline were detected in C.paspali, idtQ also catalyzes the formation of paspalinine from 13-desoxypaxilline via paspalicine as an intermediate. Finally, the alpha-prenyltransferase idtF prenylates paspalinine at the C-20 or the C-21 positions to yield paspalitrems A and C, respectively. The hydroxylation of paspalitrem A at C-32 by a still unknown oxidase affords paspalitrem B. This is Terpene cyclase idtB from Claviceps paspali (Rye ergot fungus).